Reading from the N-terminus, the 409-residue chain is tRNA(Met) cytidine acetate ligase (409 aa).

ATP contacts are provided by residues 7–20, Gly102, Asn169, and Arg194; that span reads VVEYNPMHNGHLHH.

The protein belongs to the TmcAL family.

The protein localises to the cytoplasm. It carries out the reaction cytidine(34) in elongator tRNA(Met) + acetate + ATP = N(4)-acetylcytidine(34) in elongator tRNA(Met) + AMP + diphosphate. In terms of biological role, catalyzes the formation of N(4)-acetylcytidine (ac(4)C) at the wobble position of elongator tRNA(Met), using acetate and ATP as substrates. First activates an acetate ion to form acetyladenylate (Ac-AMP) and then transfers the acetyl group to tRNA to form ac(4)C34. The sequence is that of tRNA(Met) cytidine acetate ligase from Clostridium botulinum (strain Loch Maree / Type A3).